Consider the following 178-residue polypeptide: Large ribosomal subunit protein uL6 (178 aa).

The protein belongs to the universal ribosomal protein uL6 family. As to quaternary structure, part of the 50S ribosomal subunit.

In terms of biological role, this protein binds to the 23S rRNA, and is important in its secondary structure. It is located near the subunit interface in the base of the L7/L12 stalk, and near the tRNA binding site of the peptidyltransferase center. The protein is Large ribosomal subunit protein uL6 of Limosilactobacillus fermentum (strain NBRC 3956 / LMG 18251) (Lactobacillus fermentum).